The sequence spans 339 residues: Caspase drICE (339 aa).

Residues 1–28 (MDATNNGESADQVGIRVGNPEQPNDHTD) constitute a propeptide that is removed on maturation. A disordered region spans residues 1 to 45 (MDATNNGESADQVGIRVGNPEQPNDHTDALGSVGSGGAGSSGLVA). Residues His-169 and Cys-211 contribute to the active site. Positions 218–230 (GGVTMQRSQTETD) are excised as a propeptide.

Belongs to the peptidase C14A family. In terms of assembly, heterotetramer that consists of two anti-parallel arranged heterodimers, each one formed by a 21 kDa (p21) and a 12 kDa (p12) subunit. Inactive pro-form can homodimerize. Dronc and Drice can form a stable complex. Interacts with Diap2 (via BIR3 domain) to form a stable complex. May interact with some isoforms of Dark.

Its activity is regulated as follows. Zymogen activated by proteolytic cleavage; cleaved by the initiator caspase Dronc upon apoptosis induction. Functionally, involved in the activation cascade of caspases responsible for apoptosis execution. Acts downstream of rpr. Cleaves baculovirus p35 and lamin DmO in vitro. In Drosophila melanogaster (Fruit fly), this protein is Caspase drICE (Drice).